The chain runs to 272 residues: Ribosomal RNA small subunit methyltransferase A (272 aa).

The S-adenosyl-L-methionine site is built by Asn27, Leu29, Gly54, Glu75, Asp97, and Asn117.

The protein belongs to the class I-like SAM-binding methyltransferase superfamily. rRNA adenine N(6)-methyltransferase family. RsmA subfamily.

It is found in the cytoplasm. The catalysed reaction is adenosine(1518)/adenosine(1519) in 16S rRNA + 4 S-adenosyl-L-methionine = N(6)-dimethyladenosine(1518)/N(6)-dimethyladenosine(1519) in 16S rRNA + 4 S-adenosyl-L-homocysteine + 4 H(+). Specifically dimethylates two adjacent adenosines (A1518 and A1519) in the loop of a conserved hairpin near the 3'-end of 16S rRNA in the 30S particle. May play a critical role in biogenesis of 30S subunits. This chain is Ribosomal RNA small subunit methyltransferase A, found in Malacoplasma penetrans (strain HF-2) (Mycoplasma penetrans).